Here is a 1036-residue protein sequence, read N- to C-terminus: Hexagonally packed intermediate-layer surface protein (1036 aa).

Residues 1 to 17 (MKKNIALMALTGVLTLA) form the signal peptide. 3 cysteine pairs are disulfide-bonded: Cys74–Cys86, Cys256–Cys275, and Cys642–Cys754.

In terms of processing, glycosylated; contains six glycans. Acylated in the N-terminal region. Post-translationally, the N-terminus is blocked.

It localises to the secreted. The protein resides in the cell wall. It is found in the S-layer. Functionally, shape maintenance, possible protection from noxious enzymes or exogenous and unsettling DNA, and may mediate homotypic cell-cell contacts. This Deinococcus radiodurans protein is Hexagonally packed intermediate-layer surface protein (hpi).